Consider the following 1170-residue polypeptide: Thrombospondin-1 (1170 aa).

A signal peptide spans 1-18 (MELLRGLGVLFLLHMCGS). The heparin-binding stretch occupies residues 47–95 (RLVKGQDLSSPAFRIENANLIPAVPDDKFQDLLDAVWADKGFIFLASLR). Residues 56-270 (SPAFRIENAN…HKTKDLQAIC (215 aa)) enclose the Laminin G-like domain. Residues Cys171 and Cys232 are joined by a disulfide bond. N-linked (GlcNAc...) asparagine glycosylation is found at Asn248 and Asn360. Residues 316-373 (PLCFHNGVQYKNNEEWTVDSCTECHCQNSVTICKKVSCPIMPCSNATVPDGECCPRCW) enclose the VWFC domain. TSP type-1 domains lie at 379–429 (DDGW…QECD), 435–490 (DGGW…DACP), and 492–547 (NGGW…QDCP). Residue Trp385 is glycosylated (C-linked (Man) tryptophan). 3 disulfides stabilise this stretch: Cys391/Cys423, Cys395/Cys428, and Cys406/Cys413. C-linked (Man) tryptophan glycans are attached at residues Trp438 and Trp441. 3 disulfides stabilise this stretch: Cys447–Cys484, Cys451–Cys489, and Cys462–Cys474. An O-linked (Fuc...) threonine glycan is attached at Thr450. Residue Trp498 is glycosylated (C-linked (Man) tryptophan). 21 cysteine pairs are disulfide-bonded: Cys504–Cys541, Cys508–Cys546, Cys519–Cys531, Cys551–Cys562, Cys556–Cys572, Cys575–Cys586, Cys592–Cys608, Cys599–Cys617, Cys620–Cys644, Cys650–Cys663, Cys657–Cys676, Cys678–Cys689, Cys705–Cys713, Cys718–Cys738, Cys754–Cys774, Cys777–Cys797, Cys813–Cys833, Cys836–Cys856, Cys874–Cys894, Cys910–Cys930, and Cys946–Cys1167. Thr507 carries O-linked (Fuc...) threonine glycosylation. An involved in retention in extracellular matrix (ECM); involved in trimer formation region spans residues 531 to 1152 (CVGDVTENQV…YAGGRLGLFV (622 aa)). Residues 547 to 587 (PIDGCLSNPCFAGAKCTSYPDGSWKCGACPPGYSGNGIQCK) form the EGF-like 1 domain. O-linked (Xyl) serine glycosylation is present at Ser553. The EGF-like 2 domain maps to 646 to 690 (PRNPCTDGTHDCNKNAKCNYLGHYSDPMYRCECKPGYAGNGIICG). TSP type-3 repeat units lie at residues 691–726 (EDTD…NSGQ), 727–762 (EDYD…NPAQ), 763–785 (YDYD…NPDQ), 786–821 (ADTD…NVDQ), 822–844 (RDTD…NPDQ), 845–882 (LDSD…NANQ), 883–918 (ADHD…NPDQ), and 919–954 (KDSD…DISE). An N-linked (GlcNAc...) asparagine glycan is attached at Asn708. Positions 840–934 (HNPDQLDSDS…GRGDACKDDF (95 aa)) are disordered. Basic and acidic residues-rich tracts occupy residues 883 to 894 (ADHDKDGKGDAC) and 917 to 934 (DQKD…KDDF). The Cell attachment site signature appears at 926–928 (RGD). In terms of domain architecture, TSP C-terminal spans 958 to 1170 (RRFQMIPLDP…SDMKYECRDS (213 aa)). N-linked (GlcNAc...) asparagine glycosylation occurs at Asn1067.

It belongs to the thrombospondin family. In terms of assembly, homotrimer; disulfide-linked. Can bind to fibrinogen, fibronectin, laminin, type V collagen and integrins alpha-V/beta-1, alpha-V/beta-3 and alpha-IIb/beta-3. Binds heparin. Interacts (via the C-terminal domain) with CD47. Interacts (via the TSP type I repeats) with CD36; the interaction conveys an antiangiogenic effect. Interacts (via the TSP type I repeats) with HRG; the interaction blocks the antiangiogenic effect of THBS1 with CD36. Interacts with ATF6 (via lumenal domain). Interacts with FN1; this interaction is enhanced by TNFAIP6, which may act as a bridging molecule between FN1 and THBS1. Interacts with SIRPA; the interaction stimulates phosphorylation of SIRPA.

It is found in the secreted. It localises to the cell surface. Its subcellular location is the extracellular space. The protein localises to the extracellular matrix. The protein resides in the endoplasmic reticulum. It is found in the sarcoplasmic reticulum. Its function is as follows. Adhesive glycoprotein that mediates cell-to-cell and cell-to-matrix interactions. Multifunctional, involved in inflammation, angiogenesis, wound healing, reactive oxygen species (ROS) signaling, nitrous oxide (NO) signaling, apoptosis, senescence, aging, cellular self-renewal, stemness, and cardiovascular and metabolic homeostasis. Negatively modulates dendritic cell activation and cytokine release, as part of an autocrine feedback loop, contributing to the resolution of inflammation and immune homeostasis. Ligand for receptor CD47. Modulates nitrous oxide (NO) signaling via CD47, hence playing a role as a pressor agent, supporting blood pressure. Plays a role in endothelial cell senescence, acting via CD47, by increasing the abundance and activation of NADPH oxidase NOX1, and so generating excess ROS. Inhibits stem cell self-renewal, acting via CD47 signaling, probably by regulation of the stem cell transcription factors POU5F1/OCT4, SOX2, MYC/c-Myc and KLF4. Negatively modulates wound healing, acting via CD47. Ligand for receptor CD36. Involved in inducing apoptosis in podocytes in response to elevated free fatty acids, acting via CD36. Plays a role in suppressing angiogenesis, acting, depending on context, via CD36 or CD47. Promotes cellular senescence in a TP53-CDKN1A-RB1 signaling-dependent manner. Ligand for immunoglobulin-like cell surface receptor SIRPA. Involved in ROS signaling in non-phagocytic cells, stimulating NADPH oxidase-derived ROS production, acting via interaction with SIRPA. Plays a role in metabolic dysfunction in diet-induced obesity, perhaps acting by exacerbating adipose inflammatory activity; its effects may be mediated, at least in part, through enhanced adipocyte proliferation. Plays a role in ER stress response, via its interaction with the activating transcription factor 6 alpha (ATF6) which produces adaptive ER stress response factors. May be involved in age-related conditions, including metabolic dysregulation, during normal aging. The chain is Thrombospondin-1 (Thbs1) from Mus musculus (Mouse).